The chain runs to 308 residues: Zinc-binding protein TroA (308 aa).

The first 22 residues, 1–22 (MIRERICACVLALGMLTGFTHA), serve as a signal peptide directing secretion. Zn(2+) contacts are provided by His68, His133, His199, and Asp279.

Belongs to the bacterial solute-binding protein 9 family. In terms of assembly, monomer.

Its subcellular location is the periplasm. Functionally, part of the ATP-binding cassette (ABC) transport system TroABC involved in zinc import. Binds zinc with high affinity and specificity and delivers it to the membrane permease for translocation into the cytoplasm. This Treponema pallidum (strain Nichols) protein is Zinc-binding protein TroA (troA).